The primary structure comprises 425 residues: Histone-binding protein RBBP7 (425 aa).

A2 carries the N-acetylalanine modification. A Phosphoserine modification is found at S3. K4 carries the N6-acetyllysine; alternate modification. Residue K4 forms a Glycyl lysine isopeptide (Lys-Gly) (interchain with G-Cter in SUMO2); alternate linkage. K4 is covalently cross-linked (Glycyl lysine isopeptide (Lys-Gly) (interchain with G-Cter in ubiquitin); alternate). T10 is modified (phosphothreonine). WD repeat units lie at residues 47–122, 128–173, 181–217, 228–269, 275–312, 318–369, and 376–403; these read QWLP…KINH, RARY…LRLR, GLSW…KIVD, VVED…HLVD, VNCL…LHTF, EIFQ…LFIH, and ISDF…IWQM. A Phosphoserine modification is found at S95. K101 is covalently cross-linked (Glycyl lysine isopeptide (Lys-Gly) (interchain with G-Cter in SUMO2)). K119 carries the N6-acetyllysine modification. K155 participates in a covalent cross-link: Glycyl lysine isopeptide (Lys-Gly) (interchain with G-Cter in SUMO2). K159 bears the N6-acetyllysine; alternate mark. Residue K159 forms a Glycyl lysine isopeptide (Lys-Gly) (interchain with G-Cter in SUMO2); alternate linkage. Position 354 is a phosphoserine (S354).

Belongs to the WD repeat RBAP46/RBAP48/MSI1 family. In terms of assembly, binds directly to helix 1 of the histone fold of histone H4, a region that is not accessible when H4 is in chromatin. Subunit of the type B histone acetyltransferase (HAT) complex, composed of RBBP7 and HAT1. Subunit of the core histone deacetylase (HDAC) complex, which is composed of HDAC1, HDAC2, RBBP4 and RBBP7. The core HDAC complex associates with SIN3A, ARID4B/SAP180, SAP18, SAP30, SAP130, SUDS3/SAP45 and possibly ARID4A/RBP1 and ING1 to form the SIN3 HDAC complex. Component of the nucleosome remodeling and deacetylase (NuRD) repressor complex, composed of core proteins MTA1, MTA2, MTA3, RBBP4, RBBP7, HDAC1, HDAC2, MBD2, MBD3, and peripherally associated proteins CDK2AP1, CDK2AP2, GATAD2A, GATAD2B, CHD3, CHD4 and CHD5. The exact stoichiometry of the NuRD complex is unknown, and some subunits such as MBD2 and MBD3, GATAD2A and GATAD2B, and CHD3, CHD4 and CHD5 define mutually exclusive NuRD complexes. The NuRD complex may interact with MBD3L1. The NuRD complex may interact with MBD3L2. Subunit of the PRC2/EED-EZH2 complex, which is composed of at least EED, EZH2, RBBP4, RBBP7 and SUZ12. The PRC2/EED-EZH2 complex may also associate with HDAC1. Component of the NURF-1 ISWI chromatin remodeling complex (also called the nucleosome-remodeling factor (NURF) complex) at least composed of SMARCA1, BPTF, RBBP4 and RBBP7. Within the complex interacts with SMARCA1. Component of the BPFT-SMARCA1 complex at least composed of SMARCA1, BPFT, RBBP4 and RBBP7; the complex is catalytically inactive and does not remodel chromatin. Within the complex interacts with SMARCA1. Interacts with BRCA1. Interacts with CDK2AP1. Interacts with CENPA. Interacts with CHD3. Interacts with CHD4. Interacts with CREBBP, and this interaction may be enhanced by the binding of phosphorylated CREB1 to CREBBP. Interacts with HDAC7. Interacts with MTA1. Interacts with PWWP2B. Interacts with RB1 (via viral protein-binding domain). Interacts with SUV39H1. In terms of tissue distribution, higher levels in brain, thymus, lung, spleen, kidney, testis, and ovary/uterus; lower levels in heart, liver, and muscle.

Its subcellular location is the nucleus. Functionally, core histone-binding subunit that may target chromatin remodeling factors, histone acetyltransferases and histone deacetylases to their histone substrates in a manner that is regulated by nucleosomal DNA. Component of several complexes which regulate chromatin metabolism. These include the type B histone acetyltransferase (HAT) complex, which is required for chromatin assembly following DNA replication; the core histone deacetylase (HDAC) complex, which promotes histone deacetylation and consequent transcriptional repression; the nucleosome remodeling and histone deacetylase complex (the NuRD complex), which promotes transcriptional repression by histone deacetylation and nucleosome remodeling; and the PRC2/EED-EZH2 complex, which promotes repression of homeotic genes during development; and the NURF (nucleosome remodeling factor) complex. The protein is Histone-binding protein RBBP7 (Rbbp7) of Mus musculus (Mouse).